Here is a 200-residue protein sequence, read N- to C-terminus: Peptidyl-tRNA hydrolase (200 aa).

Phenylalanine 16 contacts tRNA. Histidine 21 acts as the Proton acceptor in catalysis. Residues phenylalanine 67, asparagine 69, and asparagine 115 each contribute to the tRNA site.

The protein belongs to the PTH family. In terms of assembly, monomer.

The protein localises to the cytoplasm. The enzyme catalyses an N-acyl-L-alpha-aminoacyl-tRNA + H2O = an N-acyl-L-amino acid + a tRNA + H(+). In terms of biological role, hydrolyzes ribosome-free peptidyl-tRNAs (with 1 or more amino acids incorporated), which drop off the ribosome during protein synthesis, or as a result of ribosome stalling. Functionally, catalyzes the release of premature peptidyl moieties from peptidyl-tRNA molecules trapped in stalled 50S ribosomal subunits, and thus maintains levels of free tRNAs and 50S ribosomes. The protein is Peptidyl-tRNA hydrolase of Prochlorococcus marinus (strain MIT 9215).